Consider the following 145-residue polypeptide: Lysozyme-like protein 4 (145 aa).

A signal peptide spans 1-19 (MQLYLVLLLISYLLTPIGA). A C-type lysozyme domain is found at 20–145 (SILGRCTVAK…LDRWLDGCDL (126 aa)). 4 cysteine pairs are disulfide-bonded: Cys-25-Cys-143, Cys-49-Cys-130, Cys-84-Cys-95, and Cys-91-Cys-109. The active site involves Glu-54.

Belongs to the glycosyl hydrolase 22 family. As to quaternary structure, monomer. In terms of tissue distribution, expressed strongly in testis and in epididymis, and weakly in brain and lung. Detected in sperm (at protein level).

The protein resides in the secreted. It is found in the cytoplasmic vesicle. Its subcellular location is the secretory vesicle. The protein localises to the acrosome. It localises to the cell projection. The protein resides in the cilium. It is found in the flagellum. Functionally, may be involved in fertilization. Has no detectable bacteriolytic in vitro. Has no lysozyme activity in vitro. In Mus musculus (Mouse), this protein is Lysozyme-like protein 4 (Lyzl4).